Here is a 335-residue protein sequence, read N- to C-terminus: MTQEVPRRLEPSPFEWKGDAGPSVKTLRPHAIPSVAIDLASVTKSYGDKPVVDGLSFTVAAGECFGLLGPNGAGKSTITRMILGMTTPATGVITVLGVPVPSRARLARMGIGVVPQFDNLDSEFTVRENLLVFGRYFRMSTREIEAVIPSLLEFARLENKVDARVSDLSGGMKRRLTLARALINDPQLLILDEPTTGLDPHARHLIWERLRSLLARGKTILLTTHIMEEAERLCDRLCVLEAGRKIAEGRPHVLIDEKIGCQVIEIYGGNPHELSALVSPHARHVEVSGETVFCYALDPEQVRVQLDGCAGVRFLQRPPNLEDVFLRLTGRELKD.

Residues 1 to 10 (MTQEVPRRLE) are compositionally biased toward basic and acidic residues. The tract at residues 1–22 (MTQEVPRRLEPSPFEWKGDAGP) is disordered. The 231-residue stretch at 37 to 267 (IDLASVTKSY…KIGCQVIEIY (231 aa)) folds into the ABC transporter domain. 69–76 (GPNGAGKS) is a binding site for ATP.

The protein belongs to the ABC transporter superfamily. Lipooligosaccharide exporter (TC 3.A.1.102) family. In terms of assembly, the complex is composed of two ATP-binding proteins (NodI) and two transmembrane proteins (NodJ).

It localises to the cell inner membrane. Its function is as follows. Part of the ABC transporter complex NodIJ involved in the export of the nodulation factors (Nod factors), the bacterial signal molecules that induce symbiosis and subsequent nodulation induction. Nod factors are LCO (lipo-chitin oligosaccharide), a modified beta-1,4-linked N-acetylglucosamine oligosaccharide. This subunit is responsible for energy coupling to the transport system. This is Nod factor export ATP-binding protein I from Rhizobium meliloti (Ensifer meliloti).